We begin with the raw amino-acid sequence, 123 residues long: Immunoglobulin lambda variable 5-37 (123 aa).

The first 19 residues, 1–19 (MAWTPLLLLLLSHCTGSLS), serve as a signal peptide directing secretion. The framework-1 stretch occupies residues 20–44 (QPVLTQPPSSSASPGESARLTCTLP). The Ig-like domain occupies 21–123 (PVLTQPPSSS…YCMIWPSNAS (103 aa)). An intrachain disulfide couples Cys41 to Cys115. The complementarity-determining-1 stretch occupies residues 45–53 (SDINVGSYN). The interval 54–70 (IYWYQQKPGSPPRYLLY) is framework-2. The interval 71 to 77 (YYSDSDK) is complementarity-determining-2. Residues 78-115 (GQGSGVPSRFSGSKDASANTGILLISGLQSEDEADYYC) form a framework-3 region. The tract at residues 116–123 (MIWPSNAS) is complementarity-determining-3.

As to quaternary structure, immunoglobulins are composed of two identical heavy chains and two identical light chains; disulfide-linked.

It localises to the secreted. The protein localises to the cell membrane. In terms of biological role, v region of the variable domain of immunoglobulin light chains that participates in the antigen recognition. Immunoglobulins, also known as antibodies, are membrane-bound or secreted glycoproteins produced by B lymphocytes. In the recognition phase of humoral immunity, the membrane-bound immunoglobulins serve as receptors which, upon binding of a specific antigen, trigger the clonal expansion and differentiation of B lymphocytes into immunoglobulins-secreting plasma cells. Secreted immunoglobulins mediate the effector phase of humoral immunity, which results in the elimination of bound antigens. The antigen binding site is formed by the variable domain of one heavy chain, together with that of its associated light chain. Thus, each immunoglobulin has two antigen binding sites with remarkable affinity for a particular antigen. The variable domains are assembled by a process called V-(D)-J rearrangement and can then be subjected to somatic hypermutations which, after exposure to antigen and selection, allow affinity maturation for a particular antigen. This Homo sapiens (Human) protein is Immunoglobulin lambda variable 5-37.